Reading from the N-terminus, the 60-residue chain is MAKGKENRIVITLECTEAKKEGKTVSRYTTTKNKKNTTERLLLKKYNPNLQRHTIHKEIK.

It belongs to the bacterial ribosomal protein bL33 family.

This is Large ribosomal subunit protein bL33 from Chlorobium phaeobacteroides (strain DSM 266 / SMG 266 / 2430).